Reading from the N-terminus, the 137-residue chain is Small ribosomal subunit protein uS12 (137 aa).

The disordered stretch occupies residues 1–28 (MPTINQLVRKPRKSKAKKSDSPALNKGF). Residue Asp-102 is modified to 3-methylthioaspartic acid.

This sequence belongs to the universal ribosomal protein uS12 family. Part of the 30S ribosomal subunit. Contacts proteins S8 and S17. May interact with IF1 in the 30S initiation complex.

Its function is as follows. With S4 and S5 plays an important role in translational accuracy. Interacts with and stabilizes bases of the 16S rRNA that are involved in tRNA selection in the A site and with the mRNA backbone. Located at the interface of the 30S and 50S subunits, it traverses the body of the 30S subunit contacting proteins on the other side and probably holding the rRNA structure together. The combined cluster of proteins S8, S12 and S17 appears to hold together the shoulder and platform of the 30S subunit. This Staphylococcus carnosus (strain TM300) protein is Small ribosomal subunit protein uS12.